The primary structure comprises 214 residues: MSCRERTDSSCGCNGHEENRILKCVVVGDGAVGKTCLLMSYANDAFPEEYVPTVFDHYAVTVTVGGKQHLLGLYDTAGQEDYNQLRPLSYPNTDVFLICFSVVNPASYHNVQEEWVPELKDCMPHVPYVLIGTQIDLRDDPKTLARLLYMKEKPLTYEHGVKLAKAIGAQCYLECSALTQKGLKAVFDEAILTIFHPKKKKKGCLGCHGCCAII.

Residues cysteine 3 and cysteine 11 are each lipidated (S-palmitoyl cysteine). GTP-binding positions include 31-36 (AVGKTC), 46-53 (FPEEYVPT), 75-79 (DTAGQ), 133-136 (TQID), and 177-178 (AL). An Effector region motif is present at residues 50 to 58 (YVPTVFDHY). Position 211 is a cysteine methyl ester (cysteine 211). A lipid anchor (S-farnesyl cysteine) is attached at cysteine 211. The propeptide at 212-214 (AII) is removed in mature form.

Belongs to the small GTPase superfamily. Rho family. As to quaternary structure, interacts with the CRIB domains of proteins such as Pak1 and Was/Wasp. Interacts with GLUL. In terms of processing, palmitoylated; regulates localization to the plasma membrane and may be mediated by GLUL. As to expression, highly expressed in heart with moderate levels in lung and liver. Very low levels detected in brain, spleen, skeletal muscle, kidney and testis.

It localises to the cell membrane. Its function is as follows. Plasma membrane-associated small GTPase specifically involved in angiogenesis. Required for endothelial cell migration during vascular development via its interaction with GLUL. Elicits the formation of F-actin-rich structures, thereby regulating endothelial cell migration. The sequence is that of Rho-related GTP-binding protein RhoJ (Rhoj) from Mus musculus (Mouse).